The following is a 412-amino-acid chain: DNA polymerase IV (412 aa).

Residues 12 to 193 (ILHVDMNCFF…LPVGAMHGIG (182 aa)) form the UmuC domain. Residues D16 and D112 each contribute to the Mg(2+) site. Residue E113 is part of the active site. The tract at residues 235 to 257 (KGMDDREVDPSQMGQHKSVGNSM) is disordered. Polar residues predominate over residues 246 to 257 (QMGQHKSVGNSM).

The protein belongs to the DNA polymerase type-Y family. Monomer. Mg(2+) serves as cofactor.

The protein resides in the cytoplasm. The catalysed reaction is DNA(n) + a 2'-deoxyribonucleoside 5'-triphosphate = DNA(n+1) + diphosphate. In terms of biological role, poorly processive, error-prone DNA polymerase involved in untargeted mutagenesis. Copies undamaged DNA at stalled replication forks, which arise in vivo from mismatched or misaligned primer ends. These misaligned primers can be extended by PolIV. Exhibits no 3'-5' exonuclease (proofreading) activity. May be involved in translesional synthesis, in conjunction with the beta clamp from PolIII. This chain is DNA polymerase IV, found in Bacillus anthracis.